The chain runs to 362 residues: Innexin inx1 (362 aa).

Residues 1–28 lie on the Cytoplasmic side of the membrane; the sequence is MYKLLGSLKSYLKWQDIQTDNAVFRLHN. Residues 29–49 traverse the membrane as a helical segment; it reads SFTTVLLLTCSLIITATQYVG. Topologically, residues 50-110 are extracellular; the sequence is QPISCIVNGV…DAKKYYTYYQ (61 aa). Residues 111–131 form a helical membrane-spanning segment; it reads WVCFVLFFQAMACYTPKFLWN. The Cytoplasmic portion of the chain corresponds to 132-177; the sequence is KFEGGLMRMIVMGLNITICTREEKEAKRDALLDYLIKHVKRHKLYA. The chain crosses the membrane as a helical span at residues 178–198; the sequence is IRYWACEFLCCINIIVQMYLM. At 199–267 the chain is on the extracellular side; it reads NRFFDGEFLS…LPLNIVNEKT (69 aa). A helical transmembrane segment spans residues 268–288; it reads YVFIWFWFWILLVLLIGLIVF. Residues 289 to 362 lie on the Cytoplasmic side of the membrane; it reads RGCIIFMPKF…VEPSKHDRAK (74 aa).

This sequence belongs to the pannexin family. As to quaternary structure, heterooligomer of Inx2 and ogre. As to expression, in ovary, expressed in follicle cells. Expressed around the periphery of the embryo during cellular blastoderm formation. Repeating epidermal pattern emerges from stage 11, high levels of expression detected along the borders of each segment from stage 13. At stage 13, expressed in the dorsal branch of the tracheal system. During stage 15, detected in a few cells at each of the branch points of the dorsal trunk and at low levels in cardioblasts. In embryos, also expressed in the salivary gland and the hindgut (at protein level). At stage 17, expressed in the dorsal side of the CNS. Expressed in the imaginal wing disk. Expressed in larval CNS and in tissues outside of the CNS. In pupae, expressed in the CNS and in primary, secondary and tertiary pigment cells of the retina.

It is found in the cell membrane. Its subcellular location is the cell junction. The protein localises to the gap junction. The protein resides in the basolateral cell membrane. In terms of biological role, structural component of the gap junctions. Essential for generation and/or maintenance of postembryonic neuroblasts and normal development of optic lobe. The sequence is that of Innexin inx1 (ogre) from Drosophila melanogaster (Fruit fly).